The primary structure comprises 258 residues: Leucyl/phenylalanyl-tRNA--protein transferase (258 aa).

The protein belongs to the L/F-transferase family.

The protein localises to the cytoplasm. It carries out the reaction N-terminal L-lysyl-[protein] + L-leucyl-tRNA(Leu) = N-terminal L-leucyl-L-lysyl-[protein] + tRNA(Leu) + H(+). It catalyses the reaction N-terminal L-arginyl-[protein] + L-leucyl-tRNA(Leu) = N-terminal L-leucyl-L-arginyl-[protein] + tRNA(Leu) + H(+). The enzyme catalyses L-phenylalanyl-tRNA(Phe) + an N-terminal L-alpha-aminoacyl-[protein] = an N-terminal L-phenylalanyl-L-alpha-aminoacyl-[protein] + tRNA(Phe). Functions in the N-end rule pathway of protein degradation where it conjugates Leu, Phe and, less efficiently, Met from aminoacyl-tRNAs to the N-termini of proteins containing an N-terminal arginine or lysine. This Alkalilimnicola ehrlichii (strain ATCC BAA-1101 / DSM 17681 / MLHE-1) protein is Leucyl/phenylalanyl-tRNA--protein transferase.